Here is a 215-residue protein sequence, read N- to C-terminus: Riboflavin synthase (215 aa).

Lumazine-binding repeat units follow at residues 1–96 and 97–193; these read MFTG…FGGH and FVSG…YRFL. 2,4-dihydroxypteridine contacts are provided by residues 4-6, 47-49, 61-66, 100-102, Lys135, 144-146, and 158-163; these read GIV, CLT, DVMPET, GHV, SST, and SVIPHT.

Homotrimer.

It catalyses the reaction 2 6,7-dimethyl-8-(1-D-ribityl)lumazine + H(+) = 5-amino-6-(D-ribitylamino)uracil + riboflavin. Its pathway is cofactor biosynthesis; riboflavin biosynthesis; riboflavin from 2-hydroxy-3-oxobutyl phosphate and 5-amino-6-(D-ribitylamino)uracil: step 2/2. Catalyzes the dismutation of two molecules of 6,7-dimethyl-8-ribityllumazine, resulting in the formation of riboflavin and 5-amino-6-(D-ribitylamino)uracil. The protein is Riboflavin synthase (ribE) of Bacillus amyloliquefaciens (Bacillus velezensis).